We begin with the raw amino-acid sequence, 203 residues long: Transcriptional regulator GfcR (203 aa).

Belongs to the purine/pyrimidine phosphoribosyltransferase family. GfcR subfamily.

This Methanococcoides burtonii (strain DSM 6242 / NBRC 107633 / OCM 468 / ACE-M) protein is Transcriptional regulator GfcR.